The chain runs to 351 residues: L-threonine 3-dehydrogenase (351 aa).

C39 is a Zn(2+) binding site. Active-site charge relay system residues include T41 and H44. The Zn(2+) site is built by H64, E65, C94, C97, C100, and C108. Residues I176, D196, R201, 271–273 (LGI), and 295–296 (IY) contribute to the NAD(+) site.

This sequence belongs to the zinc-containing alcohol dehydrogenase family. As to quaternary structure, homotetramer. It depends on Zn(2+) as a cofactor.

The protein localises to the cytoplasm. It carries out the reaction L-threonine + NAD(+) = (2S)-2-amino-3-oxobutanoate + NADH + H(+). Its pathway is amino-acid degradation; L-threonine degradation via oxydo-reductase pathway; glycine from L-threonine: step 1/2. Its function is as follows. Catalyzes the NAD(+)-dependent oxidation of L-threonine to 2-amino-3-ketobutyrate. This Francisella philomiragia subsp. philomiragia (strain ATCC 25017 / CCUG 19701 / FSC 153 / O#319-036) protein is L-threonine 3-dehydrogenase.